The primary structure comprises 262 residues: Nodulation protein J (262 aa).

An ABC transmembrane type-2 domain is found at 33 to 259 (ASLLGNLADP…FASIALFRRR (227 aa)). The next 7 helical transmembrane spans lie at 37–57 (GNLA…GLIV), 64–84 (SYIA…SATF), 102–122 (GILF…VWAA), 125–145 (SVLA…ASWT), 149–169 (CAIP…MVVI), 177–197 (YFVF…GAVF), and 236–256 (LHVG…IALF).

Belongs to the ABC-2 integral membrane protein family. Lipooligosaccharide exporter (TC 3.A.1.102) subfamily. In terms of assembly, the complex is composed of two ATP-binding proteins (NodI) and two transmembrane proteins (NodJ).

It is found in the cell inner membrane. In terms of biological role, part of the ABC transporter complex NodIJ involved in the export of the nodulation factors (Nod factors), the bacterial signal molecules that induce symbiosis and subsequent nodulation induction. Nod factors are LCO (lipo-chitin oligosaccharide), a modified beta-1,4-linked N-acetylglucosamine oligosaccharide. This subunit encodes the transporter. The polypeptide is Nodulation protein J (nodJ) (Bradyrhizobium diazoefficiens (strain JCM 10833 / BCRC 13528 / IAM 13628 / NBRC 14792 / USDA 110)).